Consider the following 229-residue polypeptide: Secreted RxLR effector protein PITG_22926 (229 aa).

The first 23 residues, 1-23, serve as a signal peptide directing secretion; it reads MRCNHTLCVVAITFLVSWSQTLS. Residues 34 to 45 carry the RxLR-dEER motif; it reads PLVRSVSATEER.

Belongs to the RxLR effector family.

It localises to the secreted. It is found in the host nucleus. Functionally, secreted effector that acts as a RNA silencing suppressor, probably by inhibiting the biogenesis of small RNAs in the host plant, to manipulate host immune responses and promote Phytophthora infection. This Phytophthora infestans (strain T30-4) (Potato late blight agent) protein is Secreted RxLR effector protein PITG_22926.